A 302-amino-acid polypeptide reads, in one-letter code: Mas-related G-protein coupled receptor member A3 (302 aa).

Residues 1 to 17 (MNETIPGSIDIETLIPD) lie on the Extracellular side of the membrane. N2 is a glycosylation site (N-linked (GlcNAc...) asparagine). Residues 18 to 38 (LMIIIFGLVGLTGNAIVFWLL) form a helical membrane-spanning segment. Residues 39 to 46 (GFRMHRTA) are Cytoplasmic-facing. Residues 47–67 (FLVYILNLALADFLFLLCHII) traverse the membrane as a helical segment. N68 carries N-linked (GlcNAc...) asparagine glycosylation. The Extracellular portion of the chain corresponds to 68–81 (NSTVDLLKFTLPKG). The chain crosses the membrane as a helical span at residues 82–102 (IFAFCFHTIKRVLYITGLSML). The Cytoplasmic portion of the chain corresponds to 103-129 (SAISTERCLSVLCPIWYHCRRPEHTST). A helical transmembrane segment spans residues 130–150 (VMCAVIWVLSLLICILDGYFC). The Extracellular portion of the chain corresponds to 151 to 167 (GYLDNHYFNYSVCQAWD). N-linked (GlcNAc...) asparagine glycosylation is present at N159. Residues 168–188 (IFIGAYLMFLFVVLCLSTLAL) traverse the membrane as a helical segment. Residues 189–211 (LARLFCGARNMKFTRLFVTIMLT) lie on the Cytoplasmic side of the membrane. The chain crosses the membrane as a helical span at residues 212-232 (VLVFLLCGLPWGITWFLLFWI). At 233-242 (APGVFVLDYS) the chain is on the extracellular side. A helical membrane pass occupies residues 243 to 263 (PLLVLTAINSCANPIIYFFVG). The Cytoplasmic segment spans residues 264–302 (SFRQRLNKQTLKMVLQKALQDTPETPENMVEMSRNKAEP).

The protein belongs to the G-protein coupled receptor 1 family. Mas subfamily. In terms of tissue distribution, expressed exclusively in dorsal root ganglia and nodose ganglia. Expressed in a subset of sensory neurons that includes nociceptors. Expressed in the subclass of non-peptidergic sensory neurons that are IB4(+) and VR1(-).

It is found in the cell membrane. Orphan receptor. May be a receptor for RFamide-family neuropeptides such as NPFF and NPAF, which are analgesic in vivo. May regulate nociceptor function and/or development, including the sensation or modulation of pain. Activated by the antimalarial drug chloroquine. Mediates chloroquine-induced itch, in a histamine-independent manner. This Mus musculus (Mouse) protein is Mas-related G-protein coupled receptor member A3 (Mrgpra3).